Here is a 313-residue protein sequence, read N- to C-terminus: ADP-L-glycero-D-manno-heptose-6-epimerase (313 aa).

NADP(+) contacts are provided by residues 10–11 (MI), 31–32 (DN), lysine 38, arginine 53, 75–79 (EGACS), and asparagine 92. Residue tyrosine 139 is the Proton acceptor of the active site. Lysine 143 serves as a coordination point for NADP(+). Residue asparagine 174 coordinates substrate. Valine 175 and lysine 183 together coordinate NADP(+). Catalysis depends on lysine 183, which acts as the Proton acceptor. Residues serine 185, histidine 192, 206-209 (FAGS), arginine 214, and tyrosine 277 each bind substrate.

This sequence belongs to the NAD(P)-dependent epimerase/dehydratase family. HldD subfamily. As to quaternary structure, homopentamer. NADP(+) serves as cofactor.

The catalysed reaction is ADP-D-glycero-beta-D-manno-heptose = ADP-L-glycero-beta-D-manno-heptose. It functions in the pathway nucleotide-sugar biosynthesis; ADP-L-glycero-beta-D-manno-heptose biosynthesis; ADP-L-glycero-beta-D-manno-heptose from D-glycero-beta-D-manno-heptose 7-phosphate: step 4/4. The protein operates within bacterial outer membrane biogenesis; LPS core biosynthesis. Its function is as follows. Catalyzes the interconversion between ADP-D-glycero-beta-D-manno-heptose and ADP-L-glycero-beta-D-manno-heptose via an epimerization at carbon 6 of the heptose. In Vibrio vulnificus (strain YJ016), this protein is ADP-L-glycero-D-manno-heptose-6-epimerase.